Consider the following 166-residue polypeptide: Small ribosomal subunit protein uS5 (166 aa).

In terms of domain architecture, S5 DRBM spans 11-74 (LIEKLVSVKR…ENAKKNMVSV (64 aa)).

The protein belongs to the universal ribosomal protein uS5 family. In terms of assembly, part of the 30S ribosomal subunit. Contacts proteins S4 and S8.

In terms of biological role, with S4 and S12 plays an important role in translational accuracy. Its function is as follows. Located at the back of the 30S subunit body where it stabilizes the conformation of the head with respect to the body. In Francisella tularensis subsp. tularensis (strain FSC 198), this protein is Small ribosomal subunit protein uS5.